Consider the following 170-residue polypeptide: Adenine phosphoribosyltransferase (170 aa).

Belongs to the purine/pyrimidine phosphoribosyltransferase family. In terms of assembly, homodimer.

The protein localises to the cytoplasm. The catalysed reaction is AMP + diphosphate = 5-phospho-alpha-D-ribose 1-diphosphate + adenine. It functions in the pathway purine metabolism; AMP biosynthesis via salvage pathway; AMP from adenine: step 1/1. Catalyzes a salvage reaction resulting in the formation of AMP, that is energically less costly than de novo synthesis. The protein is Adenine phosphoribosyltransferase of Brevibacillus brevis (strain 47 / JCM 6285 / NBRC 100599).